Consider the following 279-residue polypeptide: Large ribosomal subunit protein uL2 (279 aa).

Positions 223 to 279 (VAMNPVDHPMGGGEGRSSGGHPRSRKGLYAKGGKTRSANKYSKNMIVKKRVNKRLSK) are disordered. Positions 268-279 (IVKKRVNKRLSK) are enriched in basic residues.

This sequence belongs to the universal ribosomal protein uL2 family. As to quaternary structure, part of the 50S ribosomal subunit. Forms a bridge to the 30S subunit in the 70S ribosome.

One of the primary rRNA binding proteins. Required for association of the 30S and 50S subunits to form the 70S ribosome, for tRNA binding and peptide bond formation. It has been suggested to have peptidyltransferase activity; this is somewhat controversial. Makes several contacts with the 16S rRNA in the 70S ribosome. In Cytophaga hutchinsonii (strain ATCC 33406 / DSM 1761 / CIP 103989 / NBRC 15051 / NCIMB 9469 / D465), this protein is Large ribosomal subunit protein uL2.